A 1887-amino-acid chain; its full sequence is MSTPTDSKAPLRQVKRVQFGILSPDEIRRMSVTEGGVQFAETMEGGRPKLGGLMDPRQGVIDRTSRCQTCAGNMTECPGHFGHIDLAKPVFHIGFITKTIKILRCVCFYCSKMLVSPHNPKIKEIVMKSRGQPRKRLAYVYDLCKGKTICEGGEDMDLTKENQQPDPNKKPGHGGCGHYQPSIRRTGLDLTAEWKHQNEDSQEKKIVVSAERVWEILKHITDEECFILGMDPKYARPDWMIVTVLPVPPLAVRPAVVMFGAAKNQDDLTHKLSDIIKANNELRKNEASGAAAHVIQENIKMLQFHVATLVDNDMPGMPRAMQKSGKPLKAIKARLKGKEGRIRGNLMGKRVDFSARTVITPDPNLRIDQVGVPRSIAQNLTFPELVTPFNIDRMQELVRRGNSQYPGAKYIVRDNGERIDLRFHPKSSDLHLQCGYKVERHLRDDDLVIFNRQPTLHKMSMMGHRVKVLPWSTFRMNLSCTSPYNADFDGDEMNLHVPQSMETRAEVENIHITPRQIITPQANKPVMGIVQDTLTAVRKMTKRDVFITREQVMNLLMFLPTWDAKMPQPCILKPRPLWTGKQIFSLIIPGNVNMIRTHSTHPDEEDEGPYKWISPGDTKVMVEHGELIMGILCKKSLGTSAGSLLHICFLELGHDIAGRFYGNIQTVINNWLLFEGHSIGIGDTIADPQTYNEIQQAIKKAKDDVINVIQKAHNMELEPTPGNTLRQTFENKVNRILNDARDKTGGSAKKSLTEYNNLKAMVVSGSKGSNINISQVIACVGQQNVEGKRIPYGFRKRTLPHFIKDDYGPESRGFVENSYLAGLTPSEFYFHAMGGREGLIDTAVKTAETGYIQRRLIKAMESVMVNYDGTVRNSVGQLIQLRYGEDGLCGELVEFQNMPTVKLSNKSFEKRFKFDWSNERLMKKVFTDDVIKEMTDSSEAIQELEAEWDRLVSDRDSLRQIFPNGESKVVLPCNLQRMIWNVQKIFHINKRLPTDLSPIRVIKGVKTLLERCVIVTGNDRISKQANENATLLFQCLIRSTLCTKYVSEEFRLSTEAFEWLVGEIETRFQQAQANPGEMVGALAAQSLGEPATQMTLNTFHFAGVSSKNVTLGVPRLKEIINISKKPKAPSLTVFLTGGAARDAEKAKNVLCRLEHTTLRKVTANTAIYYDPDPQRTVISEDQEFVNVYYEMPDFDPTRISPWLLRIELDRKRMTDKKLTMEQIAEKINVGFGEDLNCIFNDDNADKLVLRIRIMNNEENKFQDEDEAVDKMEDDMFLRCIEANMLSDMTLQGIEAIGKVYMHLPQTDSKKRIVITETGEFKAIGEWLLETDGTSMMKVLSERDVDPIRTSSNDICEIFQVLGIEAVRKSVEKEMNAVLQFYGLYVNYRHLALLCDVMTAKGHLMAITRHGINRQDTGALMRCSFEETVDVLMDAAAHAETDPMRGVSENIIMGQLPKMGTGCFDLLLDAEKCRFGIEIPNTLGNSMLGGAAMFIGGGSTPSMTPPMTPWANCNTPRYFSPPGHVSAMTPGGPSFSPSAASDASGMSPSWSPAHPGSSPSSPGPSMSPYFPASPSVSPSYSPTSPNYTASSPGGASPNYSPSSPNYSPTSPLYASPRYASTTPNFNPQSTGYSPSSSGYSPTSPVYSPTVQFQSSPSFAGSGSNIYSPGNAYSPSSSNYSPNSPSYSPTSPSYSPSSPSYSPTSPCYSPTSPSYSPTSPNYTPVTPSYSPTSPNYSASPQYSPASPAYSQTGVKYSPTSPTYSPPSPSYDGSPGSPQYTPGSPQYSPASPKYSPTSPLYSPSSPQHSPSNQYSPTGSTYSATSPRYSPNMSIYSPSSTKYSPTSPTYTPTARNYSPTSPMYSPTAPSHYSPTSPAYSPSSPTFEESED.

Positions 67, 70, 77, 80, 107, 110, 150, and 176 each coordinate Zn(2+). The segment at 156-178 (MDLTKENQQPDPNKKPGHGGCGH) is disordered. Residues D487, D489, and D491 each contribute to the Mg(2+) site. Positions 825-837 (PSEFYFHAMGGRE) are bridging helix. A Glycyl lysine isopeptide (Lys-Gly) (interchain with G-Cter in ubiquitin) cross-link involves residue K1260. Disordered regions lie at residues 1528-1565 (TPGG…GPSM) and 1579-1887 (YSPT…ESED). Composition is skewed to low complexity over residues 1529 to 1565 (PGGP…GPSM), 1579 to 1610 (YSPT…PTSP), and 1626 to 1650 (PQST…PTVQ). Repeat unit 1 spans residues 1579–1585 (YSPTSPN). Positions 1579–1881 (YSPTSPNYTA…SPAYSPSSPT (303 aa)) are C-terminal domain (CTD); 32 X 7 AA approximate tandem repeats of Y-[ST]-P-[STNVAPGN]-[STGMA]-[PSTR]-[SNAGCQKTLRIMH]. The 2; approximate repeat unit spans residues 1586–1592 (YTASSPG). Repeat copies occupy residues 1598-1604 (YSPSSPN), 1605-1611 (YSPTSPL), 1631-1637 (YSPSSSG), and 1638-1644 (YSPTSPV). Residues 1651 to 1664 (FQSSPSFAGSGSNI) show a composition bias toward polar residues. Low complexity predominate over residues 1665–1760 (YSPGNAYSPS…GVKYSPTSPT (96 aa)). Tandem repeats lie at residues 1671-1677 (YSPSSSN), 1678-1684 (YSPNSPS), 1685-1691 (YSPTSPS), 1692-1698 (YSPSSPS), 1699-1705 (YSPTSPC), 1706-1712 (YSPTSPS), 1713-1719 (YSPTSPN), 1720-1726 (YTPVTPS), 1727-1733 (YSPTSPN), 1740-1746 (YSPASPA), 1754-1760 (YSPTSPT), 1761-1767 (YSPPSPS), 1777-1783 (YTPGSPQ), 1784-1790 (YSPASPK), 1791-1797 (YSPTSPL), 1798-1804 (YSPSSPQ), and 1811-1817 (YSPTGST). The segment covering 1776-1786 (QYTPGSPQYSP) has biased composition (polar residues). The span at 1788–1813 (SPKYSPTSPLYSPSSPQHSPSNQYSP) shows a compositional bias: low complexity. A compositionally biased stretch (polar residues) spans 1814–1831 (TGSTYSATSPRYSPNMSI). Residues 1818 to 1824 (YSATSPR) form a 24; approximate repeat. A run of 8 repeats spans residues 1825–1831 (YSPNMSI), 1832–1838 (YSPSSTK), 1839–1845 (YSPTSPT), 1846–1852 (YTPTARN), 1853–1859 (YSPTSPM), 1860–1866 (YSPTAPS), 1868–1874 (YSPTSPA), and 1875–1881 (YSPSSPT). A compositionally biased stretch (low complexity) spans 1832 to 1849 (YSPSSTKYSPTSPTYTPT). Residues 1850-1859 (ARNYSPTSPM) show a composition bias toward polar residues. Positions 1860 to 1881 (YSPTAPSHYSPTSPAYSPSSPT) are enriched in low complexity.

Belongs to the RNA polymerase beta' chain family. Component of the RNA polymerase II (Pol II) complex consisting of 12 subunits. The tandem 7 residues repeats in the C-terminal domain (CTD) can be highly phosphorylated. The phosphorylation activates Pol II. Phosphorylation occurs mainly at residues 'Ser-2' and 'Ser-5' of the heptapeptide repeat. The phosphorylation state is believed to result from the balanced action of site-specific CTD kinases and phosphatase, and a 'CTD code' that specifies the position of Pol II within the transcription cycle has been proposed. Post-translationally, following transcription stress, the elongating form of RNA polymerase II (RNA pol IIo) is polyubiquitinated via 'Lys-63'-linkages on Lys-1260 at DNA damage sites without leading to degradation: ubiquitination promotes RNA pol IIo backtracking to allow access by the transcription-coupled nucleotide excision repair (TC-NER) machinery. Subsequent DEF1-dependent polyubiquitination by the elongin complex via 'Lys-48'-linkages may lead to proteasome-mediated degradation; presumably at stalled RNA pol II where TC-NER has failed, to halt global transcription and enable 'last resort' DNA repair pathways.

The protein resides in the nucleus. It carries out the reaction RNA(n) + a ribonucleoside 5'-triphosphate = RNA(n+1) + diphosphate. DNA-dependent RNA polymerase catalyzes the transcription of DNA into RNA using the four ribonucleoside triphosphates as substrates. Largest and catalytic component of RNA polymerase II which synthesizes mRNA precursors and many functional non-coding RNAs. Forms the polymerase active center together with the second largest subunit. Pol II is the central component of the basal RNA polymerase II transcription machinery. It is composed of mobile elements that move relative to each other. RPB1 is part of the core element with the central large cleft, the clamp element that moves to open and close the cleft and the jaws that are thought to grab the incoming DNA template. At the start of transcription, a single-stranded DNA template strand of the promoter is positioned within the central active site cleft of Pol II. A bridging helix emanates from RPB1 and crosses the cleft near the catalytic site and is thought to promote translocation of Pol II by acting as a ratchet that moves the RNA-DNA hybrid through the active site by switching from straight to bent conformations at each step of nucleotide addition. During transcription elongation, Pol II moves on the template as the transcript elongates. Elongation is influenced by the phosphorylation status of the C-terminal domain (CTD) of Pol II largest subunit (RPB1), which serves as a platform for assembly of factors that regulate transcription initiation, elongation, termination and mRNA processing. This chain is DNA-directed RNA polymerase II subunit RPB1, found in Drosophila melanogaster (Fruit fly).